A 336-amino-acid polypeptide reads, in one-letter code: Phospho-N-acetylmuramoyl-pentapeptide-transferase (336 aa).

10 consecutive transmembrane segments (helical) span residues 3–23 (LTLI…PYFI), 53–73 (GGTV…LFSI), 78–98 (SLAL…IGFL), 118–138 (LALQ…PSGI), 143–163 (VFGY…FWVV), 174–194 (GIDG…GVIA), 200–220 (FDVL…FLFN), 226–246 (VFMG…ISIA), 251–271 (WTLL…MLQV), and 316–336 (AFLW…LYVF).

It belongs to the glycosyltransferase 4 family. MraY subfamily. It depends on Mg(2+) as a cofactor.

It localises to the cell membrane. The catalysed reaction is UDP-N-acetyl-alpha-D-muramoyl-L-alanyl-gamma-D-glutamyl-L-lysyl-D-alanyl-D-alanine + di-trans,octa-cis-undecaprenyl phosphate = Mur2Ac(oyl-L-Ala-gamma-D-Glu-L-Lys-D-Ala-D-Ala)-di-trans,octa-cis-undecaprenyl diphosphate + UMP. It functions in the pathway cell wall biogenesis; peptidoglycan biosynthesis. Catalyzes the initial step of the lipid cycle reactions in the biosynthesis of the cell wall peptidoglycan: transfers peptidoglycan precursor phospho-MurNAc-pentapeptide from UDP-MurNAc-pentapeptide onto the lipid carrier undecaprenyl phosphate, yielding undecaprenyl-pyrophosphoryl-MurNAc-pentapeptide, known as lipid I. The chain is Phospho-N-acetylmuramoyl-pentapeptide-transferase from Streptococcus pyogenes serotype M6 (strain ATCC BAA-946 / MGAS10394).